The following is a 182-amino-acid chain: 7-carboxy-7-deazaguanine synthase (182 aa).

Substrate-binding positions include 12-14 (LQG) and R27. One can recognise a Radical SAM core domain in the interval 18–182 (HTGTPAVFIR…LQTHKLIDIR (165 aa)). Positions 31, 35, and 38 each coordinate [4Fe-4S] cluster. A Mg(2+)-binding site is contributed by T40. Position 68 (T68) interacts with substrate. Residues G70 and 111–113 (SPK) contribute to the S-adenosyl-L-methionine site.

It belongs to the radical SAM superfamily. 7-carboxy-7-deazaguanine synthase family. Homodimer. The cofactor is [4Fe-4S] cluster. Requires S-adenosyl-L-methionine as cofactor. It depends on Mg(2+) as a cofactor.

It carries out the reaction 6-carboxy-5,6,7,8-tetrahydropterin + H(+) = 7-carboxy-7-deazaguanine + NH4(+). It functions in the pathway purine metabolism; 7-cyano-7-deazaguanine biosynthesis. Functionally, catalyzes the complex heterocyclic radical-mediated conversion of 6-carboxy-5,6,7,8-tetrahydropterin (CPH4) to 7-carboxy-7-deazaguanine (CDG), a step common to the biosynthetic pathways of all 7-deazapurine-containing compounds. The polypeptide is 7-carboxy-7-deazaguanine synthase (Bacteroides thetaiotaomicron (strain ATCC 29148 / DSM 2079 / JCM 5827 / CCUG 10774 / NCTC 10582 / VPI-5482 / E50)).